We begin with the raw amino-acid sequence, 184 residues long: UPF0316 protein BPUM_0594 (184 aa).

Transmembrane regions (helical) follow at residues 9–29 (AFTM…FSTM), 41–61 (AAAF…SIVL), and 67–87 (IQNV…GMKI).

This sequence belongs to the UPF0316 family.

The protein localises to the cell membrane. The sequence is that of UPF0316 protein BPUM_0594 from Bacillus pumilus (strain SAFR-032).